Reading from the N-terminus, the 440-residue chain is D-serine dehydratase (440 aa).

Position 116 is an N6-(pyridoxal phosphate)lysine (Lys116).

The protein belongs to the serine/threonine dehydratase family. DsdA subfamily. As to quaternary structure, monomer. Pyridoxal 5'-phosphate is required as a cofactor.

It carries out the reaction D-serine = pyruvate + NH4(+). This Salmonella dublin (strain CT_02021853) protein is D-serine dehydratase.